The primary structure comprises 417 residues: Magnesium-protoporphyrin IX monomethyl ester [oxidative] cyclase, chloroplastic (417 aa).

Residues 1-45 (MASAMELSLLNPAMHHYGIAAKTASHLPVVPARRASSGAVRFRVR) constitute a chloroplast transit peptide.

This sequence belongs to the AcsF family. The cofactor is Fe cation.

The protein resides in the plastid. It localises to the chloroplast membrane. The enzyme catalyses Mg-protoporphyrin IX 13-monomethyl ester + 3 NADPH + 3 O2 + 2 H(+) = 3,8-divinyl protochlorophyllide a + 3 NADP(+) + 5 H2O. Its pathway is porphyrin-containing compound metabolism; chlorophyll biosynthesis. Its function is as follows. Catalyzes the formation of the isocyclic ring in chlorophyll biosynthesis. Mediates the cyclase reaction, which results in the formation of divinylprotochlorophyllide (Pchlide) characteristic of all chlorophylls from magnesium-protoporphyrin IX 13-monomethyl ester (MgPMME). In Hordeum vulgare (Barley), this protein is Magnesium-protoporphyrin IX monomethyl ester [oxidative] cyclase, chloroplastic (CRD1).